Here is a 600-residue protein sequence, read N- to C-terminus: Adenine deaminase 3 (600 aa).

This sequence belongs to the metallo-dependent hydrolases superfamily. Adenine deaminase family. Mn(2+) serves as cofactor.

It catalyses the reaction adenine + H2O + H(+) = hypoxanthine + NH4(+). This is Adenine deaminase 3 from Rhizobium johnstonii (strain DSM 114642 / LMG 32736 / 3841) (Rhizobium leguminosarum bv. viciae).